Consider the following 255-residue polypeptide: SLA class II histocompatibility antigen, DQ haplotype D alpha chain (255 aa).

The signal sequence occupies residues 1-23 (MVPGRVLMWGALALTAVMSACGG). Residues 24–120 (EDIAADHVAS…QVPEVTVFPK (97 aa)) are alpha-1. The Extracellular segment spans residues 24–217 (EDIAADHVAS…IPAPMSELTE (194 aa)). 2 N-linked (GlcNAc...) asparagine glycosylation sites follow: Asn104 and Asn144. Residues 113–205 (PEVTVFPKSP…LDKPLLKHWE (93 aa)) enclose the Ig-like C1-type domain. Residues 121 to 204 (SPVMLGQPNT…GLDKPLLKHW (84 aa)) are alpha-2. Cys133 and Cys189 are disulfide-bonded. The interval 205 to 217 (EPEIPAPMSELTE) is connecting peptide. The helical transmembrane segment at 218–240 (TVVCALGLIVGLVGIVVGTVFII) threads the bilayer. Residues 241 to 255 (QGLRSGGPSRHQGSL) are Cytoplasmic-facing.

This sequence belongs to the MHC class II family.

The protein resides in the membrane. This chain is SLA class II histocompatibility antigen, DQ haplotype D alpha chain, found in Sus scrofa (Pig).